A 186-amino-acid chain; its full sequence is Methyl-CpG-binding domain protein 3-like 1 (186 aa).

The interval 1 to 104 is transcription repressor; it reads MGKTSQRKQC…TSTDTVASAS (104 aa).

The protein belongs to the MBD3L family. As to expression, highly expressed in testis. Not detected in the other tissues tested.

The protein localises to the nucleus. Its function is as follows. Transcriptional repressor. The polypeptide is Methyl-CpG-binding domain protein 3-like 1 (Mbd3l1) (Mus musculus (Mouse)).